The following is a 124-amino-acid chain: Small ribosomal subunit protein uS12 (124 aa).

3-methylthioaspartic acid is present on aspartate 89.

Belongs to the universal ribosomal protein uS12 family. As to quaternary structure, part of the 30S ribosomal subunit. Contacts proteins S8 and S17. May interact with IF1 in the 30S initiation complex.

Its function is as follows. With S4 and S5 plays an important role in translational accuracy. Functionally, interacts with and stabilizes bases of the 16S rRNA that are involved in tRNA selection in the A site and with the mRNA backbone. Located at the interface of the 30S and 50S subunits, it traverses the body of the 30S subunit contacting proteins on the other side and probably holding the rRNA structure together. The combined cluster of proteins S8, S12 and S17 appears to hold together the shoulder and platform of the 30S subunit. The protein is Small ribosomal subunit protein uS12 of Glaesserella parasuis serovar 5 (strain SH0165) (Haemophilus parasuis).